A 134-amino-acid polypeptide reads, in one-letter code: Holo-[acyl-carrier-protein] synthase (134 aa).

Residues D8 and E57 each contribute to the Mg(2+) site.

This sequence belongs to the P-Pant transferase superfamily. AcpS family. The cofactor is Mg(2+).

It is found in the cytoplasm. It catalyses the reaction apo-[ACP] + CoA = holo-[ACP] + adenosine 3',5'-bisphosphate + H(+). In terms of biological role, transfers the 4'-phosphopantetheine moiety from coenzyme A to a Ser of acyl-carrier-protein. In Rhizobium johnstonii (strain DSM 114642 / LMG 32736 / 3841) (Rhizobium leguminosarum bv. viciae), this protein is Holo-[acyl-carrier-protein] synthase.